Consider the following 296-residue polypeptide: 4-hydroxy-tetrahydrodipicolinate synthase (296 aa).

Threonine 49 is a binding site for pyruvate. Tyrosine 137 functions as the Proton donor/acceptor in the catalytic mechanism. Lysine 165 functions as the Schiff-base intermediate with substrate in the catalytic mechanism. Residue isoleucine 207 participates in pyruvate binding.

Belongs to the DapA family. Homotetramer; dimer of dimers.

It is found in the cytoplasm. The enzyme catalyses L-aspartate 4-semialdehyde + pyruvate = (2S,4S)-4-hydroxy-2,3,4,5-tetrahydrodipicolinate + H2O + H(+). The protein operates within amino-acid biosynthesis; L-lysine biosynthesis via DAP pathway; (S)-tetrahydrodipicolinate from L-aspartate: step 3/4. In terms of biological role, catalyzes the condensation of (S)-aspartate-beta-semialdehyde [(S)-ASA] and pyruvate to 4-hydroxy-tetrahydrodipicolinate (HTPA). The sequence is that of 4-hydroxy-tetrahydrodipicolinate synthase from Bradyrhizobium diazoefficiens (strain JCM 10833 / BCRC 13528 / IAM 13628 / NBRC 14792 / USDA 110).